The chain runs to 250 residues: MSHLTTCLVFFLLAFVTYTNASGVFEVHNNCPYTVWAAATPIGGGRRLERGQSWWFWAPPGTKMARIWGRTNCNFDGAGRGWCQTGDCGGVLECKGWGKPPNTLAEYALNQFSNLDFWDISVIDGFNIPMSFGPTNPGPGKCHPIQCVANINGECPGSLRVPGGCNNPCTTFGGQQYCCTQGPCGPTDLSRFFKQRCPDAYSYPQDDPTSTFTCQSWTTDYKVMFCPYGSTHNETTNFPLEMPTSTLEVA.

The signal sequence occupies residues 1–21 (MSHLTTCLVFFLLAFVTYTNA). Intrachain disulfides connect C31–C226, C73–C83, C88–C94, C142–C214, C147–C197, C155–C165, C169–C178, and C179–C184.

Belongs to the thaumatin family.

This chain is Osmotin-like protein OSML15, found in Solanum commersonii (Commerson's wild potato).